A 117-amino-acid polypeptide reads, in one-letter code: Conotoxin vil14.3 (117 aa).

A signal peptide spans 1–22 (MGFRVLVLVVMATTSALPFTFS). Positions 23–90 (EEPGRSPFRP…FAELSVGQRR (68 aa)) are excised as a propeptide. Positions 53–79 (RADGQPPDMRQPEMRRPEMRRPEVRQP) are disordered. Positions 62–79 (RQPEMRRPEMRRPEVRQP) are enriched in basic and acidic residues. Intrachain disulfides connect Cys-96-Cys-116 and Cys-100-Cys-112.

The protein belongs to the conotoxin R superfamily. Expressed by the venom duct.

It is found in the secreted. In Conus villepinii (Villepin's cone), this protein is Conotoxin vil14.3.